The sequence spans 230 residues: MNELVDTTEMYLRTIYDLEEEGVTPLRARIAERLDQSGPTVSQTVSRMERDGLLRVAGDRHLELTEKGRALAIAVMRKHRLAERLLVDVIGLPWEEVHAEACRWEHVMSEDVERRLVKVLNNPTTSPFGNPIPGLVELGVGPEPGADDANLVRLTELPAGSPVAVVVRQLTEHVQGDIDLITRLKDAGVVPNARVTVETTPGGGVTIVIPGHENVTLPHEMAHAVKVEKV.

In terms of domain architecture, HTH dtxR-type spans 4-65; that stretch reads LVDTTEMYLR…VAGDRHLELT (62 aa).

This sequence belongs to the DtxR/MntR family. In terms of assembly, homodimer.

It is found in the cytoplasm. In terms of biological role, metal-dependent DNA-binding protein that controls transcription of many genes involved in iron metabolism. The protein is Iron-dependent repressor IdeR (ideR) of Mycobacterium bovis (strain ATCC BAA-935 / AF2122/97).